Here is a 295-residue protein sequence, read N- to C-terminus: Small ribosomal subunit protein uS2 (295 aa).

It belongs to the universal ribosomal protein uS2 family.

The protein is Small ribosomal subunit protein uS2 of Rickettsia canadensis (strain McKiel).